A 614-amino-acid polypeptide reads, in one-letter code: Membrane protein insertase YidC (614 aa).

A helical transmembrane segment spans residues isoleucine 6–glutamate 26. 2 stretches are compositionally biased toward polar residues: residues proline 34–serine 48 and glutamate 60–threonine 70. The disordered stretch occupies residues proline 34 to leucine 87. 4 helical membrane passes run tryptophan 380–alanine 400, phenylalanine 450–valine 470, leucine 484–glutamine 504, and proline 524–valine 544. Residues threonine 562–lysine 614 are disordered. Residues lysine 575 to asparagine 602 are compositionally biased toward polar residues.

Belongs to the OXA1/ALB3/YidC family. Type 1 subfamily. As to quaternary structure, interacts with the Sec translocase complex via SecD. Specifically interacts with transmembrane segments of nascent integral membrane proteins during membrane integration.

The protein localises to the cell inner membrane. Required for the insertion and/or proper folding and/or complex formation of integral membrane proteins into the membrane. Involved in integration of membrane proteins that insert both dependently and independently of the Sec translocase complex, as well as at least some lipoproteins. Aids folding of multispanning membrane proteins. The protein is Membrane protein insertase YidC of Nitrosomonas europaea (strain ATCC 19718 / CIP 103999 / KCTC 2705 / NBRC 14298).